We begin with the raw amino-acid sequence, 100 residues long: ATP phosphoribosyltransferase (100 aa).

It belongs to the ATP phosphoribosyltransferase family. Long subfamily. As to quaternary structure, equilibrium between an active dimeric form, an inactive hexameric form and higher aggregates. Interconversion between the various forms is largely reversible and is influenced by the natural substrates and inhibitors of the enzyme. Mg(2+) serves as cofactor.

It is found in the cytoplasm. The catalysed reaction is 1-(5-phospho-beta-D-ribosyl)-ATP + diphosphate = 5-phospho-alpha-D-ribose 1-diphosphate + ATP. The protein operates within amino-acid biosynthesis; L-histidine biosynthesis; L-histidine from 5-phospho-alpha-D-ribose 1-diphosphate: step 1/9. Its activity is regulated as follows. Feedback inhibited by histidine. In terms of biological role, catalyzes the condensation of ATP and 5-phosphoribose 1-diphosphate to form N'-(5'-phosphoribosyl)-ATP (PR-ATP). Has a crucial role in the pathway because the rate of histidine biosynthesis seems to be controlled primarily by regulation of HisG enzymatic activity. This chain is ATP phosphoribosyltransferase (hisG), found in Klebsiella pneumoniae.